Here is a 619-residue protein sequence, read N- to C-terminus: UPF0329 protein ECU08_2070 (619 aa).

Composition is skewed to basic and acidic residues over residues 350-359 (EREKREESKG) and 369-385 (GAGE…RKEE). A disordered region spans residues 350–425 (EREKREESKG…REKKMGEEHH (76 aa)). A compositionally biased stretch (acidic residues) spans 386-396 (EGVEVEEEESA).

The protein belongs to the UPF0329 family.

This chain is UPF0329 protein ECU08_2070, found in Encephalitozoon cuniculi (strain GB-M1) (Microsporidian parasite).